The following is a 654-amino-acid chain: MSDFQHAQLDWDENGQPLSRAFGDVYFSRHSGLNETRHVFLATNRLAERFAALGDGEVLCIGETGFGTGLNFLCAWQLFEQVAPAGARLEFVSVEKFPLAAADLRRALALWPELAPWSEALLGQYLAVHPGFQRLAFAGGRIGLTLLLGDALECLPQLDARVDAWFLDGFAPAKNPDMWSPALFAELARLSAPQATLGTFTSAGFVRRGLIEAGFAMQRVPGYGQKREMLGGTYQGPPANAGKPWYARPAPHAGRRAALVVGGGLAGCASAASLAARGWQVTLIERHPGLAREASGNPQGVLYLKLSAHGTPLSRLVLSGFGHTRRLLERLRRGHDWDACGVLQLAFDAKEAQRQAQLAAAFPADLLHGLDREQAERLAGVALPAGGLFYPEAGWVHPPALCQALAATPGITLLSGRAVRLRREGDDWCAYAGDECLARAPLAILATAADIRDFPPAAELPLKRIRGQVTRLPATPQSRALRTVVCAEGYVAPPRGDEHTLGASFDFKSEDLAPTLAEHQGNLELLREISPDLLQRLGADDLPLERLEGRAAFRCTSPDYLPLVGPLAERAAFDEAYAVLARDARQVPERACPWLPGLYLNSGHGSRGLISAPLSGELLAAWICGEPLPLPRAVAEACHPNRFLLRDLVRGQRG.

Residues 1-235 form a tRNA (mnm(5)s(2)U34)-methyltransferase region; the sequence is MSDFQHAQLD…KREMLGGTYQ (235 aa). The segment at 261–654 is FAD-dependent cmnm(5)s(2)U34 oxidoreductase; sequence VGGGLAGCAS…LRDLVRGQRG (394 aa).

This sequence in the N-terminal section; belongs to the methyltransferase superfamily. tRNA (mnm(5)s(2)U34)-methyltransferase family. In the C-terminal section; belongs to the DAO family. Requires FAD as cofactor.

Its subcellular location is the cytoplasm. It carries out the reaction 5-aminomethyl-2-thiouridine(34) in tRNA + S-adenosyl-L-methionine = 5-methylaminomethyl-2-thiouridine(34) in tRNA + S-adenosyl-L-homocysteine + H(+). Its function is as follows. Catalyzes the last two steps in the biosynthesis of 5-methylaminomethyl-2-thiouridine (mnm(5)s(2)U) at the wobble position (U34) in tRNA. Catalyzes the FAD-dependent demodification of cmnm(5)s(2)U34 to nm(5)s(2)U34, followed by the transfer of a methyl group from S-adenosyl-L-methionine to nm(5)s(2)U34, to form mnm(5)s(2)U34. The protein is tRNA 5-methylaminomethyl-2-thiouridine biosynthesis bifunctional protein MnmC of Pseudomonas aeruginosa (strain UCBPP-PA14).